A 126-amino-acid polypeptide reads, in one-letter code: Aspartate 1-decarboxylase (126 aa).

Ser25 acts as the Schiff-base intermediate with substrate; via pyruvic acid in catalysis. Ser25 is modified (pyruvic acid (Ser)). A substrate-binding site is contributed by Thr57. The active-site Proton donor is Tyr58. Position 73 to 75 (73 to 75 (GAA)) interacts with substrate.

This sequence belongs to the PanD family. As to quaternary structure, heterooctamer of four alpha and four beta subunits. It depends on pyruvate as a cofactor. Is synthesized initially as an inactive proenzyme, which is activated by self-cleavage at a specific serine bond to produce a beta-subunit with a hydroxyl group at its C-terminus and an alpha-subunit with a pyruvoyl group at its N-terminus.

It localises to the cytoplasm. It carries out the reaction L-aspartate + H(+) = beta-alanine + CO2. The protein operates within cofactor biosynthesis; (R)-pantothenate biosynthesis; beta-alanine from L-aspartate: step 1/1. Its function is as follows. Catalyzes the pyruvoyl-dependent decarboxylation of aspartate to produce beta-alanine. The chain is Aspartate 1-decarboxylase from Edwardsiella ictaluri (strain 93-146).